A 179-amino-acid chain; its full sequence is Large ribosomal subunit protein uL5 (179 aa).

This sequence belongs to the universal ribosomal protein uL5 family. As to quaternary structure, part of the 50S ribosomal subunit; part of the 5S rRNA/L5/L18/L25 subcomplex. Contacts the 5S rRNA and the P site tRNA. Forms a bridge to the 30S subunit in the 70S ribosome.

Functionally, this is one of the proteins that bind and probably mediate the attachment of the 5S RNA into the large ribosomal subunit, where it forms part of the central protuberance. In the 70S ribosome it contacts protein S13 of the 30S subunit (bridge B1b), connecting the 2 subunits; this bridge is implicated in subunit movement. Contacts the P site tRNA; the 5S rRNA and some of its associated proteins might help stabilize positioning of ribosome-bound tRNAs. This chain is Large ribosomal subunit protein uL5, found in Burkholderia cenocepacia (strain HI2424).